A 186-amino-acid polypeptide reads, in one-letter code: GMP synthase [glutamine-hydrolyzing] subunit A (186 aa).

Residues 2 to 186 (SIVIINNFGQ…ENFNKICENY (185 aa)) enclose the Glutamine amidotransferase type-1 domain. Catalysis depends on cysteine 76, which acts as the Nucleophile. Residues histidine 163 and glutamate 165 contribute to the active site.

In terms of assembly, heterodimer composed of a glutamine amidotransferase subunit (A) and a GMP-binding subunit (B).

It catalyses the reaction XMP + L-glutamine + ATP + H2O = GMP + L-glutamate + AMP + diphosphate + 2 H(+). Its pathway is purine metabolism; GMP biosynthesis; GMP from XMP (L-Gln route): step 1/1. Its function is as follows. Catalyzes the synthesis of GMP from XMP. The sequence is that of GMP synthase [glutamine-hydrolyzing] subunit A from Methanosphaera stadtmanae (strain ATCC 43021 / DSM 3091 / JCM 11832 / MCB-3).